Reading from the N-terminus, the 346-residue chain is Aldose 1-epimerase (346 aa).

Arginine 79 contributes to the substrate binding site. Histidine 175 functions as the Proton donor in the catalytic mechanism. Aspartate 245 is a substrate binding site. Catalysis depends on glutamate 309, which acts as the Proton acceptor.

This sequence belongs to the aldose epimerase family.

It is found in the cytoplasm. The catalysed reaction is alpha-D-glucose = beta-D-glucose. Its pathway is carbohydrate metabolism; hexose metabolism. Mutarotase converts alpha-aldose to the beta-anomer. It is active on D-glucose, L-arabinose, D-xylose, D-galactose, maltose and lactose. In Escherichia coli (strain K12), this protein is Aldose 1-epimerase (galM).